A 371-amino-acid chain; its full sequence is Ferrochelatase (371 aa).

Fe cation-binding residues include histidine 218 and glutamate 299.

The protein belongs to the ferrochelatase family.

It is found in the cytoplasm. It catalyses the reaction heme b + 2 H(+) = protoporphyrin IX + Fe(2+). It functions in the pathway porphyrin-containing compound metabolism; protoheme biosynthesis; protoheme from protoporphyrin-IX: step 1/1. Functionally, catalyzes the ferrous insertion into protoporphyrin IX. The sequence is that of Ferrochelatase from Cupriavidus pinatubonensis (strain JMP 134 / LMG 1197) (Cupriavidus necator (strain JMP 134)).